Consider the following 249-residue polypeptide: Ubiquinone/menaquinone biosynthesis C-methyltransferase UbiE (249 aa).

S-adenosyl-L-methionine is bound by residues Thr-72, Asp-93, and 121 to 122; that span reads DA.

Belongs to the class I-like SAM-binding methyltransferase superfamily. MenG/UbiE family.

The catalysed reaction is a 2-demethylmenaquinol + S-adenosyl-L-methionine = a menaquinol + S-adenosyl-L-homocysteine + H(+). It carries out the reaction a 2-methoxy-6-(all-trans-polyprenyl)benzene-1,4-diol + S-adenosyl-L-methionine = a 5-methoxy-2-methyl-3-(all-trans-polyprenyl)benzene-1,4-diol + S-adenosyl-L-homocysteine + H(+). It participates in quinol/quinone metabolism; menaquinone biosynthesis; menaquinol from 1,4-dihydroxy-2-naphthoate: step 2/2. It functions in the pathway cofactor biosynthesis; ubiquinone biosynthesis. Its function is as follows. Methyltransferase required for the conversion of demethylmenaquinol (DMKH2) to menaquinol (MKH2) and the conversion of 2-polyprenyl-6-methoxy-1,4-benzoquinol (DDMQH2) to 2-polyprenyl-3-methyl-6-methoxy-1,4-benzoquinol (DMQH2). This Cellvibrio japonicus (strain Ueda107) (Pseudomonas fluorescens subsp. cellulosa) protein is Ubiquinone/menaquinone biosynthesis C-methyltransferase UbiE.